Here is a 326-residue protein sequence, read N- to C-terminus: DNA repair protein RAD51 homolog 4 (326 aa).

A preferentially binds ssDNA region spans residues 1 to 83 (MGVLRAGLCP…ELKTSTAILS (83 aa)). An ATP-binding site is contributed by 107 to 114 (GAPGSGKT).

This sequence belongs to the RecA family. RAD51 subfamily. In terms of assembly, part of the BCDX2 complex consisting of RAD51B, RAD51C, RAD51D and XRCC2; the complex has a ring-like structure arranged into a flat disc around a central channel. In the absence of DNA, the BCDX2 subcomplex XRCC2:RAD51D formed a multimeric ring structure; in the presence of single-stranded DNA it formed a filamentous structure with the ssDNA. Interacts with SWSAP1 and ZSWIM7; involved in homologous recombination repair. Interacts with BLM; required for stimulation of BLM activity by the BCDX2 subcomplex XRCC2:RAD51D.

The protein localises to the nucleus. Functionally, involved in the homologous recombination repair (HRR) pathway of double-stranded DNA breaks arising during DNA replication or induced by DNA-damaging agents. Bind to single-stranded DNA (ssDNA) and has DNA-dependent ATPase activity. Part of the RAD51 paralog protein complex BCDX2 which acts in the BRCA1-BRCA2-dependent HR pathway. Upon DNA damage, BCDX2 acts downstream of BRCA2 recruitment and upstream of RAD51 recruitment. BCDX2 binds predominantly to the intersection of the four duplex arms of the Holliday junction and to junction of replication forks. The BCDX2 complex was originally reported to bind single-stranded DNA, single-stranded gaps in duplex DNA and specifically to nicks in duplex DNA. Involved in telomere maintenance. The BCDX2 subcomplex XRCC2:RAD51D can stimulate Holliday junction resolution by BLM. In Bos taurus (Bovine), this protein is DNA repair protein RAD51 homolog 4 (RAD51D).